The following is a 337-amino-acid chain: Quinolinate synthase (337 aa).

The iminosuccinate site is built by H38 and S59. C104 serves as a coordination point for [4Fe-4S] cluster. Iminosuccinate contacts are provided by residues 130–132 and S147; that span reads YAN. A [4Fe-4S] cluster-binding site is contributed by C191. Iminosuccinate-binding positions include 217-219 and T234; that span reads HPE. C288 is a [4Fe-4S] cluster binding site.

This sequence belongs to the quinolinate synthase family. Type 1 subfamily. [4Fe-4S] cluster serves as cofactor.

Its subcellular location is the cytoplasm. It carries out the reaction iminosuccinate + dihydroxyacetone phosphate = quinolinate + phosphate + 2 H2O + H(+). It participates in cofactor biosynthesis; NAD(+) biosynthesis; quinolinate from iminoaspartate: step 1/1. In terms of biological role, catalyzes the condensation of iminoaspartate with dihydroxyacetone phosphate to form quinolinate. This chain is Quinolinate synthase, found in Wigglesworthia glossinidia brevipalpis.